Reading from the N-terminus, the 181-residue chain is Peptidyl-tRNA hydrolase (181 aa).

Tyr14 is a tRNA binding site. His19 acts as the Proton acceptor in catalysis. Residues Tyr60, Asn62, and Asn108 each coordinate tRNA.

Belongs to the PTH family. As to quaternary structure, monomer.

It is found in the cytoplasm. It catalyses the reaction an N-acyl-L-alpha-aminoacyl-tRNA + H2O = an N-acyl-L-amino acid + a tRNA + H(+). Its function is as follows. Hydrolyzes ribosome-free peptidyl-tRNAs (with 1 or more amino acids incorporated), which drop off the ribosome during protein synthesis, or as a result of ribosome stalling. In terms of biological role, catalyzes the release of premature peptidyl moieties from peptidyl-tRNA molecules trapped in stalled 50S ribosomal subunits, and thus maintains levels of free tRNAs and 50S ribosomes. This chain is Peptidyl-tRNA hydrolase, found in Metamycoplasma arthritidis (strain 158L3-1) (Mycoplasma arthritidis).